The following is a 161-amino-acid chain: 2-C-methyl-D-erythritol 2,4-cyclodiphosphate synthase (161 aa).

A divalent metal cation is bound by residues Asp11 and His13. 4-CDP-2-C-methyl-D-erythritol 2-phosphate-binding positions include 11–13 (DIH) and 37–38 (HS). His45 contacts a divalent metal cation. Residues 59–61 (DIG) and 135–138 (TTNE) contribute to the 4-CDP-2-C-methyl-D-erythritol 2-phosphate site.

This sequence belongs to the IspF family. In terms of assembly, homotrimer. The cofactor is a divalent metal cation.

It catalyses the reaction 4-CDP-2-C-methyl-D-erythritol 2-phosphate = 2-C-methyl-D-erythritol 2,4-cyclic diphosphate + CMP. The protein operates within isoprenoid biosynthesis; isopentenyl diphosphate biosynthesis via DXP pathway; isopentenyl diphosphate from 1-deoxy-D-xylulose 5-phosphate: step 4/6. In terms of biological role, involved in the biosynthesis of isopentenyl diphosphate (IPP) and dimethylallyl diphosphate (DMAPP), two major building blocks of isoprenoid compounds. Catalyzes the conversion of 4-diphosphocytidyl-2-C-methyl-D-erythritol 2-phosphate (CDP-ME2P) to 2-C-methyl-D-erythritol 2,4-cyclodiphosphate (ME-CPP) with a corresponding release of cytidine 5-monophosphate (CMP). This Acaryochloris marina (strain MBIC 11017) protein is 2-C-methyl-D-erythritol 2,4-cyclodiphosphate synthase.